A 317-amino-acid chain; its full sequence is MMQRAPQPIACLLGPTASGKTAAALAFAARAPVEIVSVDSALVYREMDIGTAKPSSEERAVAPHHLIDIVDPVDAYSAADFRADALRLVGEIEARGNVPLLVGGTMLYYKALTQGLNDLPAADPEVRATLDADAAREGWPALHARLAAVDAVTAARLAPNDSQRIQRALEVFMLTGQPMSALLAAPARSDDLAKGYRFVPIALEPSDRSVLHARIAQRFDAMLAKGFIDEVRRLRARGDLHPGLPAMRCVGYRQAWEYLDGETDYDTMRDKGVFATRQLCKRQLTWLRAMPERIVVDCCAGDAAGLALQAIERVIAG.

ATP is bound at residue 14-21; the sequence is GPTASGKT. Substrate is bound at residue 16–21; that stretch reads TASGKT. Interaction with substrate tRNA regions lie at residues 39 to 42, 163 to 167, and 248 to 253; these read DSAL, QRIQR, and RCVGYR.

It belongs to the IPP transferase family. As to quaternary structure, monomer. Mg(2+) is required as a cofactor.

It carries out the reaction adenosine(37) in tRNA + dimethylallyl diphosphate = N(6)-dimethylallyladenosine(37) in tRNA + diphosphate. In terms of biological role, catalyzes the transfer of a dimethylallyl group onto the adenine at position 37 in tRNAs that read codons beginning with uridine, leading to the formation of N6-(dimethylallyl)adenosine (i(6)A). This chain is tRNA dimethylallyltransferase, found in Paraburkholderia phymatum (strain DSM 17167 / CIP 108236 / LMG 21445 / STM815) (Burkholderia phymatum).